The sequence spans 609 residues: Elongation factor 4 (609 aa).

The tr-type G domain occupies 11–193 (SRIRNFSIIA…QIVEKVPAPS (183 aa)). Residues 23-28 (DHGKST) and 140-143 (NKID) each bind GTP.

Belongs to the TRAFAC class translation factor GTPase superfamily. Classic translation factor GTPase family. LepA subfamily.

Its subcellular location is the cell membrane. It carries out the reaction GTP + H2O = GDP + phosphate + H(+). Functionally, required for accurate and efficient protein synthesis under certain stress conditions. May act as a fidelity factor of the translation reaction, by catalyzing a one-codon backward translocation of tRNAs on improperly translocated ribosomes. Back-translocation proceeds from a post-translocation (POST) complex to a pre-translocation (PRE) complex, thus giving elongation factor G a second chance to translocate the tRNAs correctly. Binds to ribosomes in a GTP-dependent manner. This chain is Elongation factor 4, found in Halalkalibacterium halodurans (strain ATCC BAA-125 / DSM 18197 / FERM 7344 / JCM 9153 / C-125) (Bacillus halodurans).